Consider the following 396-residue polypeptide: L-lactate dehydrogenase (396 aa).

An FMN hydroxy acid dehydrogenase domain is found at 1-380 (MIISAASDYR…SGDSLVQELG (380 aa)). Position 24 (Y24) interacts with substrate. S106 and Q127 together coordinate FMN. Y129 serves as a coordination point for substrate. Position 155 (T155) interacts with FMN. R164 contributes to the substrate binding site. K251 contributes to the FMN binding site. H275 serves as the catalytic Proton acceptor. Substrate is bound at residue R278. 306–330 (DSGIRNGLDVVRMIALGADTVLLGR) contacts FMN.

The protein belongs to the FMN-dependent alpha-hydroxy acid dehydrogenase family. Requires FMN as cofactor.

It localises to the cell inner membrane. It catalyses the reaction (S)-lactate + A = pyruvate + AH2. Its function is as follows. Catalyzes the conversion of L-lactate to pyruvate. Is coupled to the respiratory chain. This chain is L-lactate dehydrogenase, found in Salmonella arizonae (strain ATCC BAA-731 / CDC346-86 / RSK2980).